The following is a 436-amino-acid chain: Tol-Pal system protein TolB (436 aa).

The N-terminal stretch at 1-19 is a signal peptide; it reads MVKCSLIRALMVVAGLVGA.

The protein belongs to the TolB family. The Tol-Pal system is composed of five core proteins: the inner membrane proteins TolA, TolQ and TolR, the periplasmic protein TolB and the outer membrane protein Pal. They form a network linking the inner and outer membranes and the peptidoglycan layer.

The protein localises to the periplasm. Functionally, part of the Tol-Pal system, which plays a role in outer membrane invagination during cell division and is important for maintaining outer membrane integrity. This is Tol-Pal system protein TolB from Rhizobium etli (strain ATCC 51251 / DSM 11541 / JCM 21823 / NBRC 15573 / CFN 42).